Here is an 83-residue protein sequence, read N- to C-terminus: Short neurotoxin VAN-29 (83 aa).

An N-terminal signal peptide occupies residues 1–21 (MKTLLLTLVVVTIVCLDLGYT). Cystine bridges form between Cys24-Cys45, Cys38-Cys62, Cys64-Cys75, and Cys76-Cys81.

Belongs to the three-finger toxin family. Short-chain subfamily. Type I alpha-neurotoxin sub-subfamily. Expressed by the venom gland.

The protein resides in the secreted. Functionally, binds to muscle nicotinic acetylcholine receptor (nAChR) and inhibit acetylcholine from binding to the receptor, thereby impairing neuromuscular transmission. The sequence is that of Short neurotoxin VAN-29 from Laticauda laticaudata (Blue-ringed sea krait).